Reading from the N-terminus, the 206-residue chain is Small ribosomal subunit protein uS4 (206 aa).

In terms of domain architecture, S4 RNA-binding spans 96–156 (QRLDNVVYRM…EKAKKQARIV (61 aa)).

The protein belongs to the universal ribosomal protein uS4 family. Part of the 30S ribosomal subunit. Contacts protein S5. The interaction surface between S4 and S5 is involved in control of translational fidelity.

Functionally, one of the primary rRNA binding proteins, it binds directly to 16S rRNA where it nucleates assembly of the body of the 30S subunit. With S5 and S12 plays an important role in translational accuracy. The polypeptide is Small ribosomal subunit protein uS4 (Alteromonas mediterranea (strain DSM 17117 / CIP 110805 / LMG 28347 / Deep ecotype)).